Consider the following 593-residue polypeptide: Protein PSP2 (593 aa).

A compositionally biased stretch (basic and acidic residues) spans 56–65 (AGEHQRDGHQ). The segment at 56–101 (AGEHQRDGHQQHPHGGHGPMNRSRFSNAGPFGGGSMGDFANHHHPL) is disordered. Residues Ser-150 and Ser-238 each carry the phosphoserine modification. 2 disordered regions span residues 227 to 248 (KPFI…KPVD) and 280 to 593 (DSMA…DMPL). Polar residues-rich tracts occupy residues 231–241 (TKTQRSKSNPF) and 280–290 (DSMATTATGSK). The residue at position 340 (Ser-340) is a Phosphoserine. Basic and acidic residues predominate over residues 347-402 (SKPDKSDEFKGGDEQGFEKGGDDKAQLDVSNDKDKGSETDVDKQFTFKNVEREHSM). Over residues 408–426 (NGNHNNNNGNFRGSNRYRG) the composition is skewed to low complexity. Omega-N-methylarginine occurs at positions 419, 425, and 440. Position 443 is a dimethylated arginine (Arg-443). An Omega-N-methylarginine modification is found at Arg-447. Low complexity predominate over residues 449-477 (GSSYNNNNNNTNDNNNNNNNSSSNNNNGS). Polar residues-rich tracts occupy residues 486–497 (EEGLTSDSSLDA) and 505–516 (FTNSTSNTQQYS). A Phosphoserine modification is found at Ser-522. Low complexity predominate over residues 534–545 (RNNGRGNYNSSG). Omega-N-methylarginine occurs at positions 538, 551, and 575. Over residues 546-563 (MNGGSRGRGFGRGRGFGR) the composition is skewed to gly residues. A compositionally biased stretch (low complexity) spans 578-587 (SGNYSNYNNR).

The protein resides in the cytoplasm. The protein localises to the P-body. It is found in the stress granule. DNA polymerase alpha mutation suppressor. Suppressor of group II intron splicing defects of a mutation in MRS2. May play a role in mitochondrial mRNA splicing. The sequence is that of Protein PSP2 from Saccharomyces cerevisiae (strain ATCC 204508 / S288c) (Baker's yeast).